Consider the following 534-residue polypeptide: Serine/threonine-protein kinase 35 (534 aa).

Residues 32 to 176 (VESHGSLGAQ…AAAARAMDPV (145 aa)) form a disordered region. Composition is skewed to low complexity over residues 39–65 (GAQASPASAAAAEGSATRRARAATSRA) and 166–176 (PAAAARAMDPV). The Protein kinase domain occupies 202–530 (YSLLAEIGRG…FELETRMDQV (329 aa)). Residues 208 to 216 (IGRGSYGVV) and Lys231 each bind ATP. Asp360 (proton acceptor) is an active-site residue.

It belongs to the protein kinase superfamily. Ser/Thr protein kinase family. As to quaternary structure, interacts with PDLIM1/CLP-36. Post-translationally, autophosphorylated. As to expression, expressed in testis.

It localises to the nucleus. The protein localises to the nucleolus. It is found in the cytoplasm. The catalysed reaction is L-seryl-[protein] + ATP = O-phospho-L-seryl-[protein] + ADP + H(+). It carries out the reaction L-threonyl-[protein] + ATP = O-phospho-L-threonyl-[protein] + ADP + H(+). In Homo sapiens (Human), this protein is Serine/threonine-protein kinase 35 (STK35).